The chain runs to 382 residues: Mannitol-1-phosphate 5-dehydrogenase (382 aa).

Position 3–14 (3–14) interacts with NAD(+); the sequence is ALHFGAGNIGRG. Lys269 bears the N6-acetyllysine mark.

This sequence belongs to the mannitol dehydrogenase family.

The catalysed reaction is D-mannitol 1-phosphate + NAD(+) = beta-D-fructose 6-phosphate + NADH + H(+). The polypeptide is Mannitol-1-phosphate 5-dehydrogenase (Escherichia coli O9:H4 (strain HS)).